The sequence spans 184 residues: MNILEMDLGPLAPEHPIEIIVGVILVLLLTWLIAKAVVPRFEKLYEERTETIQGGIERAERAQAEAKAALEKYQAQLASARDEAAQIRDDAKSQGAQIIAEMRANAQEEADRITERANAQIQAERDQAVREVRAEIGGLATTLASRIVGESLQDDQRVQATVDRFLSSLADEPSASNSRTVNRA.

A helical transmembrane segment spans residues 19 to 39 (IIVGVILVLLLTWLIAKAVVP).

It belongs to the ATPase B chain family. F-type ATPases have 2 components, F(1) - the catalytic core - and F(0) - the membrane proton channel. F(1) has five subunits: alpha(3), beta(3), gamma(1), delta(1), epsilon(1). F(0) has three main subunits: a(1), b(2) and c(10-14). The alpha and beta chains form an alternating ring which encloses part of the gamma chain. F(1) is attached to F(0) by a central stalk formed by the gamma and epsilon chains, while a peripheral stalk is formed by the delta and b chains.

The protein resides in the cell membrane. Its function is as follows. F(1)F(0) ATP synthase produces ATP from ADP in the presence of a proton or sodium gradient. F-type ATPases consist of two structural domains, F(1) containing the extramembraneous catalytic core and F(0) containing the membrane proton channel, linked together by a central stalk and a peripheral stalk. During catalysis, ATP synthesis in the catalytic domain of F(1) is coupled via a rotary mechanism of the central stalk subunits to proton translocation. Component of the F(0) channel, it forms part of the peripheral stalk, linking F(1) to F(0). In Cutibacterium acnes (strain DSM 16379 / KPA171202) (Propionibacterium acnes), this protein is ATP synthase subunit b.